The chain runs to 841 residues: Copper-transporting P-type ATPase (841 aa).

6 helical membrane-spanning segments follow: residues 186–206, 218–238, 256–276, 285–305, 445–465, and 474–494; these read LWVS…PMLG, ATFI…LPFF, IGLG…APGI, GAAV…VFVG, AVFV…WAAI, and GLLA…GLAT. Asp-530 serves as the catalytic 4-aspartylphosphate intermediate. 2 helical membrane-spanning segments follow: residues 602-622 and 638-658; these read GIAD…DLGI and GKTV…AVAD. 2 residues coordinate Mg(2+): Asp-729 and Asp-733. 2 consecutive transmembrane segments (helical) span residues 742–762 and 800–820; these read VGIA…ITLV and VAAG…IAAA.

Belongs to the cation transport ATPase (P-type) (TC 3.A.3) family. Type IB subfamily.

The protein localises to the cell membrane. The enzyme catalyses Cu(2+)(in) + ATP + H2O = Cu(2+)(out) + ADP + phosphate + H(+). Its function is as follows. Involved in copper efflux. The polypeptide is Copper-transporting P-type ATPase (actP) (Rhizobium leguminosarum bv. viciae).